A 269-amino-acid polypeptide reads, in one-letter code: Zinc transporter ZupT (269 aa).

8 helical membrane-spanning segments follow: residues 11-31, 40-60, 80-100, 125-145, 158-178, 187-207, 217-237, and 249-269; these read IALA…LLVL, LLAF…LSEI, YGTL…HFIP, ALLT…ATFF, AFAI…PVYF, FSAS…GYWL, FGWV…DELL, and TVYG…LFKW. Fe(2+)-binding residues include asparagine 136 and glutamate 139. The Zn(2+) site is built by glutamate 139 and histidine 164. Positions 165, 168, and 197 each coordinate Fe(2+). Position 168 (glutamate 168) interacts with Zn(2+).

Belongs to the ZIP transporter (TC 2.A.5) family. ZupT subfamily.

The protein localises to the cell inner membrane. The enzyme catalyses Zn(2+)(in) = Zn(2+)(out). Functionally, mediates zinc uptake. May also transport other divalent cations. This is Zinc transporter ZupT from Stenotrophomonas maltophilia (strain R551-3).